We begin with the raw amino-acid sequence, 2075 residues long: Autophagy-related protein 2 homolog B (2075 aa).

The 95-residue stretch at Ala-13–Arg-107 folds into the Chorein N-terminal domain. A phosphoserine mark is found at Ser-255, Ser-379, Ser-496, Ser-839, Ser-885, Ser-898, and Ser-1007. Tyr-1011 is subject to Phosphotyrosine. Residues Ser-1015 and Ser-1017 each carry the phosphoserine modification. A Phosphothreonine modification is found at Thr-1021. Residues Lys-1373 to Ala-1403 form a disordered region. A Phosphoserine modification is found at Ser-1525. 3 disordered regions span residues Thr-1570 to Thr-1593, Glu-1759 to Ser-1792, and Arg-2055 to Asp-2075. Over residues Pro-1578–Thr-1587 the composition is skewed to polar residues. Basic and acidic residues predominate over residues Ile-2058–Asp-2075.

This sequence belongs to the ATG2 family. Interacts with WDR45/WIPI4.

The protein resides in the preautophagosomal structure membrane. The protein localises to the lipid droplet. It localises to the endoplasmic reticulum membrane. It carries out the reaction a 1,2-diacyl-sn-glycero-3-phospho-L-serine(in) = a 1,2-diacyl-sn-glycero-3-phospho-L-serine(out). It catalyses the reaction a 1,2-diacyl-sn-glycero-3-phosphoethanolamine(in) = a 1,2-diacyl-sn-glycero-3-phosphoethanolamine(out). Functionally, lipid transfer protein required for both autophagosome formation and regulation of lipid droplet morphology and dispersion. Tethers the edge of the isolation membrane (IM) to the endoplasmic reticulum (ER) and mediates direct lipid transfer from ER to IM for IM expansion. Binds to the ER exit site (ERES), which is the membrane source for autophagosome formation, and extracts phospholipids from the membrane source and transfers them to ATG9 (ATG9A or ATG9B) to the IM for membrane expansion. Lipid transfer activity is enhanced by WDR45/WIPI4, which promotes ATG2B-association with phosphatidylinositol 3-monophosphate (PI3P)-containing membranes. The sequence is that of Autophagy-related protein 2 homolog B from Mus musculus (Mouse).